The primary structure comprises 202 residues: Securin (202 aa).

Residues 36–55 (DGRSQVSTPHVGKMFDAPPA) are disordered. Positions 61-64 (RKAL) match the D-box motif. 2 consecutive short sequence motifs (TEK-box) follow at residues 71-73 (TEK) and 94-96 (TEK). The SH3-binding signature appears at 163–173 (PPSPLKMPPLL). A Phosphoserine; by CDK1 modification is found at Ser-165.

Belongs to the securin family. In terms of assembly, interacts with RPS10 and DNAJA1. Interacts with the caspase-like ESPL1, and prevents its protease activity probably by covering its active site. Interacts with TP53 and blocks its activity probably by blocking its binding to DNA. Interacts with the Ku 70 kDa subunit of ds-DNA kinase. Interacts with PTTG1IP. Phosphorylated at Ser-165 by CDK1 during mitosis. Post-translationally, phosphorylated in vitro by ds-DNA kinase. In terms of processing, ubiquitinated through 'Lys-11' linkage of ubiquitin moieties by the anaphase promoting complex (APC) at the onset of anaphase, conducting to its degradation. 'Lys-11'-linked ubiquitination is mediated by the E2 ligase UBE2C/UBCH10.

It localises to the cytoplasm. The protein localises to the nucleus. Functionally, regulatory protein, which plays a central role in chromosome stability, in the p53/TP53 pathway, and DNA repair. Probably acts by blocking the action of key proteins. During the mitosis, it blocks Separase/ESPL1 function, preventing the proteolysis of the cohesin complex and the subsequent segregation of the chromosomes. At the onset of anaphase, it is ubiquitinated, conducting to its destruction and to the liberation of ESPL1. Its function is however not limited to a blocking activity, since it is required to activate ESPL1. Negatively regulates the transcriptional activity and related apoptosis activity of TP53. The negative regulation of TP53 may explain the strong transforming capability of the protein when it is overexpressed. May also play a role in DNA repair via its interaction with Ku, possibly by connecting DNA damage-response pathways with sister chromatid separation. In Bos taurus (Bovine), this protein is Securin (PTTG1).